The chain runs to 226 residues: Low-molecular weight cobalt-containing nitrile hydratase subunit beta (226 aa).

A disordered region spans residues 1 to 22 (MDGIHDLGGRAGLGPIKPESDE).

The protein belongs to the nitrile hydratase subunit beta family. Heterodimer of an alpha and a beta chain.

The catalysed reaction is an aliphatic primary amide = an aliphatic nitrile + H2O. Its function is as follows. NHase catalyzes the hydration of various nitrile compounds to the corresponding amides. In Rhodococcus rhodochrous, this protein is Low-molecular weight cobalt-containing nitrile hydratase subunit beta.